An 87-amino-acid chain; its full sequence is CRISPR-associated endoribonuclease Cas2 (87 aa).

Mg(2+) is bound at residue aspartate 8.

Belongs to the CRISPR-associated endoribonuclease Cas2 protein family. In terms of assembly, homodimer, forms a heterotetramer with a Cas1 homodimer. Mg(2+) serves as cofactor.

Its function is as follows. CRISPR (clustered regularly interspaced short palindromic repeat), is an adaptive immune system that provides protection against mobile genetic elements (viruses, transposable elements and conjugative plasmids). CRISPR clusters contain sequences complementary to antecedent mobile elements and target invading nucleic acids. CRISPR clusters are transcribed and processed into CRISPR RNA (crRNA). Functions as a ssRNA-specific endoribonuclease. Involved in the integration of spacer DNA into the CRISPR cassette. The chain is CRISPR-associated endoribonuclease Cas2 from Dictyoglomus turgidum (strain DSM 6724 / Z-1310).